A 466-amino-acid chain; its full sequence is Collagenase 3 (466 aa).

The N-terminal stretch at 1–13 is a signal peptide; that stretch reads ATFFLLSWTHCWS. Residues 14–98 constitute a propeptide, activation peptide; sequence LPLPYGDDDD…PRCGVPDVGV (85 aa). The Cysteine switch motif lies at 89-96; sequence PRCGVPDV. Residue cysteine 91 participates in Zn(2+) binding. N-linked (GlcNAc...) asparagine glycosylation occurs at asparagine 112. Aspartate 123 is a binding site for Ca(2+). Residue asparagine 147 is glycosylated (N-linked (GlcNAc...) asparagine). Residue aspartate 157 participates in Ca(2+) binding. 2 residues coordinate Zn(2+): histidine 167 and aspartate 169. Residues 171-241 form an interaction with TIMP2 region; the sequence is YPFDGPSGLL…GALMFPIYTY (71 aa). Residues aspartate 174, glycine 175, serine 177, and leucine 179 each coordinate Ca(2+). Histidine 182 contributes to the Zn(2+) binding site. Asparagine 189, glycine 191, and aspartate 193 together coordinate Ca(2+). Residue histidine 195 participates in Zn(2+) binding. Ca(2+) contacts are provided by aspartate 197, aspartate 198, and glutamate 200. Position 217 (histidine 217) interacts with Zn(2+). Glutamate 218 is an active-site residue. 3 residues coordinate Zn(2+): histidine 221, histidine 227, and methionine 235. The tract at residues 258-279 is disordered; the sequence is QSLYGPGDEDPNPKHPKTPEKC. The interaction with collagen stretch occupies residues 263-466; sequence PGDEDPNPKH…VMPTNSLLWC (204 aa). The segment covering 268–279 has biased composition (basic and acidic residues); the sequence is PNPKHPKTPEKC. 4 Hemopexin repeats span residues 276 to 325, 326 to 372, 374 to 422, and 423 to 466; these read PEKC…WPEL, PNHV…GFPK, VKRL…FPGI, and GDKV…LLWC. Cysteine 279 and cysteine 466 are joined by a disulfide. Ca(2+) contacts are provided by aspartate 286, isoleucine 288, aspartate 330, and alanine 332. Tyrosine 361 carries the post-translational modification Phosphotyrosine; by PKDCC. Positions 378 and 380 each coordinate Ca(2+). Residue asparagine 404 is glycosylated (N-linked (GlcNAc...) asparagine). The Ca(2+) site is built by aspartate 427 and valine 429.

The protein belongs to the peptidase M10A family. It depends on Ca(2+) as a cofactor. Requires Zn(2+) as cofactor. Post-translationally, the proenzyme is activated by removal of the propeptide; this cleavage can be effected by other matrix metalloproteinases, such as MMP2, MMP3 and MMP14 and may involve several cleavage steps. Cleavage can also be autocatalytic, after partial maturation by another protease or after treatment with 4-aminophenylmercuric acetate (APMA) (in vitro). In terms of processing, N-glycosylated. Tyrosine phosphorylated by PKDCC/VLK.

Its subcellular location is the secreted. The protein resides in the extracellular space. It localises to the extracellular matrix. Its function is as follows. Plays a role in the degradation of extracellular matrix proteins including fibrillar collagen, fibronectin, TNC and ACAN. Cleaves triple helical collagens, including type I, type II and type III collagen, but has the highest activity with soluble type II collagen. Can also degrade collagen type IV, type XIV and type X. May also function by activating or degrading key regulatory proteins, such as TGFB1 and CCN2. Plays a role in wound healing, tissue remodeling, cartilage degradation, bone development, bone mineralization and ossification. Required for normal embryonic bone development and ossification. Plays a role in the healing of bone fractures via endochondral ossification. Plays a role in wound healing, probably by a mechanism that involves proteolytic activation of TGFB1 and degradation of CCN2. Plays a role in keratinocyte migration during wound healing. May play a role in cell migration and in tumor cell invasion. In Rattus norvegicus (Rat), this protein is Collagenase 3 (Mmp13).